Here is a 385-residue protein sequence, read N- to C-terminus: Aspartate carbamoyltransferase 2, chloroplastic (385 aa).

A chloroplast-targeting transit peptide spans 1-30; that stretch reads MTASSSLFSCSMHMEVLTPKISKWPKNFVS. Carbamoyl phosphate contacts are provided by arginine 131 and threonine 132. Positions 131 and 132 each coordinate UMP. Position 161 (lysine 161) interacts with L-aspartate. Residues arginine 182, histidine 210, and glutamine 213 each coordinate carbamoyl phosphate. UMP contacts are provided by arginine 182 and histidine 210. Arginine 243 and arginine 305 together coordinate UMP. The L-aspartate site is built by arginine 243 and arginine 305. The carbamoyl phosphate site is built by leucine 345 and proline 346.

It belongs to the aspartate/ornithine carbamoyltransferase superfamily. ATCase family. Homotrimer.

It localises to the plastid. Its subcellular location is the chloroplast. It carries out the reaction carbamoyl phosphate + L-aspartate = N-carbamoyl-L-aspartate + phosphate + H(+). The protein operates within pyrimidine metabolism; UMP biosynthesis via de novo pathway; (S)-dihydroorotate from bicarbonate: step 2/3. Its activity is regulated as follows. Feedback inhibited by UMP. Catalyzes the condensation of carbamoyl phosphate and aspartate to form carbamoyl aspartate and inorganic phosphate, the committed step in the de novo pyrimidine nucleotide biosynthesis pathway. The polypeptide is Aspartate carbamoyltransferase 2, chloroplastic (PYRB2) (Pisum sativum (Garden pea)).